The chain runs to 424 residues: Sulfatase ppz1 (424 aa).

Aspartate 13, aspartate 203, and asparagine 204 together coordinate Ca(2+).

Belongs to the sulfatase family. Ca(2+) is required as a cofactor.

Its function is as follows. Sulfatase; part of the gene cluster that mediates the biosynthesis of pyrrolopyrazines, secondary metabolites showing insecticidal activity. The role of ppz1 within the pathway has still to be determined. The single multifunctional NRPS ppzA is sufficient to produce peramine via condensation of 1-pyrroline-5-carboxylate and arginine, N-methylation of the alpha-amino group of arginine and reduction of the thioester and the cyclization to form an iminium ion resulting in release from the peptide synthetase. Deprotonation of this intermediate and oxidation of the pyrroline ring would give rise to peramine. In Epichloe species that produce only peramine, the peramine synthetase gene is not localized in a gene cluster, in contrast to Metarhizium species that contain additional pyrrolopyrazine biosynthesis genes. The 2-oxoglutarate-Fe(II) type oxidoreductase ppzC hydroxylates peramine to yield the newly identified compound 8-hydroxyperamine whereas ppzD converts L-proline into trans-4-hydroxy-L-proline, a precursor of peramine biosynthesis. The chain is Sulfatase ppz1 from Metarhizium majus (strain ARSEF 297).